Consider the following 227-residue polypeptide: Ribose-5-phosphate isomerase A (227 aa).

Residues 26-29 (TGST), 82-85 (DGAD), and 95-98 (KGGG) contribute to the substrate site. Glu-104 acts as the Proton acceptor in catalysis. Lys-122 contributes to the substrate binding site.

The protein belongs to the ribose 5-phosphate isomerase family. As to quaternary structure, homodimer.

It carries out the reaction aldehydo-D-ribose 5-phosphate = D-ribulose 5-phosphate. The protein operates within carbohydrate degradation; pentose phosphate pathway; D-ribose 5-phosphate from D-ribulose 5-phosphate (non-oxidative stage): step 1/1. Its function is as follows. Catalyzes the reversible conversion of ribose-5-phosphate to ribulose 5-phosphate. The sequence is that of Ribose-5-phosphate isomerase A from Streptococcus pyogenes serotype M2 (strain MGAS10270).